Reading from the N-terminus, the 902-residue chain is Probable dipeptidyl-aminopeptidase B (902 aa).

Disordered regions lie at residues 1 to 23 (MTRR…LSVD) and 53 to 72 (DAEA…KLGS). At 1–78 (MTRRRSTSGT…KLGSGSRTRQ (78 aa)) the chain is on the cytoplasmic side. The segment covering 7–21 (TSGTSSRSSTDSGLS) has biased composition (low complexity). Residues 79 to 99 (IFWALVILCLGGWVLALVLFL) traverse the membrane as a helical; Signal-anchor for type II membrane protein segment. Topologically, residues 100–902 (THGRASSQTA…VKRSVPAFAH (803 aa)) are vacuolar. Asn335 and Asn626 each carry an N-linked (GlcNAc...) asparagine glycan. Ser740 (charge relay system) is an active-site residue. N-linked (GlcNAc...) asparagine glycosylation is found at Asn794 and Asn799. Catalysis depends on charge relay system residues Asp817 and His850.

It belongs to the peptidase S9B family.

It localises to the vacuole membrane. It carries out the reaction Release of an N-terminal dipeptide, Xaa-Yaa-|-Zaa-, from a polypeptide, preferentially when Yaa is Pro, provided Zaa is neither Pro nor hydroxyproline.. Type IV dipeptidyl-peptidase which removes N-terminal dipeptides sequentially from polypeptides having unsubstituted N-termini provided that the penultimate residue is proline. This is Probable dipeptidyl-aminopeptidase B (dapB) from Aspergillus oryzae (strain ATCC 42149 / RIB 40) (Yellow koji mold).